Consider the following 76-residue polypeptide: MARYFRRRKFCRFTAENVTEIDYKDIVTLKNYITESGKIVPSRITGTRAKYQRQLARAIKRARYLALLPYTDLHNK.

Belongs to the bacterial ribosomal protein bS18 family. In terms of assembly, part of the 30S ribosomal subunit. Forms a tight heterodimer with protein bS6.

Functionally, binds as a heterodimer with protein bS6 to the central domain of the 16S rRNA, where it helps stabilize the platform of the 30S subunit. This Aeromonas hydrophila subsp. hydrophila (strain ATCC 7966 / DSM 30187 / BCRC 13018 / CCUG 14551 / JCM 1027 / KCTC 2358 / NCIMB 9240 / NCTC 8049) protein is Small ribosomal subunit protein bS18.